We begin with the raw amino-acid sequence, 412 residues long: MGFITKAIPIVLAALSTVNGAKILEAGPHAETIPNKYIVVMKREVSDEAFSAHTTWLSQNLNRRVMRRSGSSKAMAGMQDKYSLGGIFRAYSGEFDDAMIKDISSHDDVDYIEPDFVVRTSTNGTNLTRQDNVPSWGLARVSSKKAGGTTYYYDSSAGKGVTAYVIDTGIDINHEDFRGRAKWGKNFVDDMDEDCNGHGTHVAGTVGGTKYGLAKGVSLVAVKVLDCEGSGSNSGVIKGMEWAMREASGGGNGTAKAAGKAVMNMSLGGPRSQASNQAAKAISDAGIFMAVAAGNENMDAQHSSPASEPSVCTVAASTEDDGKADFSNYGQLVDVYAPGKDITSLKPGGSTDTLSGTSMASPHVCGLGAYLIGLGKQGGPGLCDTIKEMAHDAIQRPGEGTTSKLIYNGSGK.

The N-terminal stretch at 1–20 (MGFITKAIPIVLAALSTVNG) is a signal peptide. A propeptide spanning residues 21-126 (AKILEAGPHA…VVRTSTNGTN (106 aa)) is cleaved from the precursor. Positions 36–120 (KYIVVMKREV…YIEPDFVVRT (85 aa)) constitute an Inhibitor I9 domain. 2 N-linked (GlcNAc...) asparagine glycosylation sites follow: N123 and N126. The Peptidase S8 domain occupies 135 to 412 (SWGLARVSSK…SKLIYNGSGK (278 aa)). Residues D167 and H198 each act as charge relay system in the active site. N252 and N264 each carry an N-linked (GlcNAc...) asparagine glycan. S358 functions as the Charge relay system in the catalytic mechanism. N408 carries N-linked (GlcNAc...) asparagine glycosylation.

It belongs to the peptidase S8 family.

It is found in the secreted. Its function is as follows. Secreted subtilisin-like serine protease with keratinolytic activity that contributes to pathogenicity. The sequence is that of Subtilisin-like protease 6 (SUB6) from Trichophyton equinum (Horse ringworm fungus).